Here is a 732-residue protein sequence, read N- to C-terminus: DNA ligase (732 aa).

Residues 47 to 51, 96 to 97, and E133 contribute to the NAD(+) site; these read DAEYD and SI. Catalysis depends on K135, which acts as the N6-AMP-lysine intermediate. Residues R156, E196, K317, and K341 each contribute to the NAD(+) site. Zn(2+) is bound by residues C470, C473, C488, and C494. The BRCT domain maps to 653–732; that stretch reads RATLPLAGKT…AGMLALLQGR (80 aa).

It belongs to the NAD-dependent DNA ligase family. LigA subfamily. Mg(2+) is required as a cofactor. Mn(2+) serves as cofactor.

It catalyses the reaction NAD(+) + (deoxyribonucleotide)n-3'-hydroxyl + 5'-phospho-(deoxyribonucleotide)m = (deoxyribonucleotide)n+m + AMP + beta-nicotinamide D-nucleotide.. In terms of biological role, DNA ligase that catalyzes the formation of phosphodiester linkages between 5'-phosphoryl and 3'-hydroxyl groups in double-stranded DNA using NAD as a coenzyme and as the energy source for the reaction. It is essential for DNA replication and repair of damaged DNA. The sequence is that of DNA ligase from Paracidovorax citrulli (strain AAC00-1) (Acidovorax citrulli).